A 436-amino-acid polypeptide reads, in one-letter code: Adenylosuccinate synthetase (436 aa).

GTP contacts are provided by residues 21–27 (GDEGKGK) and 49–51 (GHT). Catalysis depends on D22, which acts as the Proton acceptor. Mg(2+) contacts are provided by D22 and G49. IMP contacts are provided by residues 22–25 (DEGK), 47–50 (NAGH), T135, R149, Q230, T245, and R309. H50 serves as the catalytic Proton donor. Residue 305 to 311 (TTTGRPR) coordinates substrate. GTP-binding positions include R311, 337-339 (KVD), and 423-425 (SSG).

Belongs to the adenylosuccinate synthetase family. As to quaternary structure, homodimer. Mg(2+) is required as a cofactor.

Its subcellular location is the cytoplasm. The enzyme catalyses IMP + L-aspartate + GTP = N(6)-(1,2-dicarboxyethyl)-AMP + GDP + phosphate + 2 H(+). It functions in the pathway purine metabolism; AMP biosynthesis via de novo pathway; AMP from IMP: step 1/2. In terms of biological role, plays an important role in the de novo pathway of purine nucleotide biosynthesis. Catalyzes the first committed step in the biosynthesis of AMP from IMP. The polypeptide is Adenylosuccinate synthetase (Thermoplasma volcanium (strain ATCC 51530 / DSM 4299 / JCM 9571 / NBRC 15438 / GSS1)).